Consider the following 303-residue polypeptide: tRNA pseudouridine synthase B (303 aa).

Asp-47 functions as the Nucleophile in the catalytic mechanism.

It belongs to the pseudouridine synthase TruB family. Type 1 subfamily.

The enzyme catalyses uridine(55) in tRNA = pseudouridine(55) in tRNA. In terms of biological role, responsible for synthesis of pseudouridine from uracil-55 in the psi GC loop of transfer RNAs. The polypeptide is tRNA pseudouridine synthase B (Legionella pneumophila (strain Paris)).